A 191-amino-acid polypeptide reads, in one-letter code: MAQLYYKYGTMNSGKTIEILKVAHNYEEQGKGVVIMTSAVDTRDGVGYVSSRIGMKRQAMAIEDDTDILGYIKNLPEKPYCILIDEAQFLKRHHVYDLARVVDELDVPVMAFGLKNDFRNELFEGSKHLLLLADKIEEIKTICQYCSRKATMVLRTDHGKPVYDGEQIQIGGNETYIPVCRKHYFKPDINN.

Residues 9–16 (GTMNSGKT) and 85–88 (DEAQ) contribute to the ATP site. The active-site Proton acceptor is the E86. The Zn(2+) site is built by C143, C146, C180, and H183.

The protein belongs to the thymidine kinase family. As to quaternary structure, homotetramer.

Its subcellular location is the cytoplasm. The catalysed reaction is thymidine + ATP = dTMP + ADP + H(+). The chain is Thymidine kinase from Streptococcus gordonii (strain Challis / ATCC 35105 / BCRC 15272 / CH1 / DL1 / V288).